We begin with the raw amino-acid sequence, 920 residues long: Bcl-2-associated transcription factor 1 (920 aa).

Residues 1–437 (MGRSNSRSHS…HRNTEEEGLK (437 aa)) form a disordered region. The span at 23 to 46 (SRSRSHSRKKRYSSRSRSRTYSRS) shows a compositional bias: basic residues. The segment covering 47–63 (RSRDRMYSRDYRRDYRN) has biased composition (basic and acidic residues). Residues 87 to 134 (RYHRGGYRPVWNRRHSRSPRRGRSRSRSPKRRSVSSQRSRSRSRRSYR) show a composition bias toward basic residues. Phosphoserine occurs at positions 102 and 104. Positions 135 to 154 (SSRSPRSSSSRSSSPYSKSP) are enriched in low complexity. Lys152 is subject to N6-acetyllysine. Residues 160–196 (GSQEKQTKKAEGEPQEESPLKSKSQEEPKDTFEHDPS) are compositionally biased toward basic and acidic residues. 2 positions are modified to phosphoserine: Ser177 and Ser181. Lys188 is covalently cross-linked (Glycyl lysine isopeptide (Lys-Gly) (interchain with G-Cter in SUMO2)). 2 positions are modified to phosphoserine: Ser196 and Ser198. Position 219 is a phosphotyrosine (Tyr219). 5 positions are modified to phosphoserine: Ser222, Ser259, Ser262, Ser264, and Ser268. Tyr284 is modified (phosphotyrosine). 5 positions are modified to phosphoserine: Ser285, Ser290, Ser297, Ser300, and Ser315. At Lys332 the chain carries N6-acetyllysine; alternate. Lys332 participates in a covalent cross-link: Glycyl lysine isopeptide (Lys-Gly) (interchain with G-Cter in SUMO2); alternate. At Arg339 the chain carries Phosphoserine. Phosphothreonine is present on residues Thr341 and Thr355. The segment covering 353–373 (GNTRDKEASKEKGSEKGRAEG) has biased composition (basic and acidic residues). Tyr383 bears the Phosphotyrosine mark. A compositionally biased stretch (basic and acidic residues) spans 384 to 396 (FSDKESGKQKFND). A phosphoserine mark is found at Ser385, Ser389, and Ser397. The segment covering 397 to 406 (SEGDDTEETE) has biased composition (acidic residues). Position 402 is a phosphothreonine (Thr402). Residue Lys413 forms a Glycyl lysine isopeptide (Lys-Gly) (interchain with G-Cter in SUMO2) linkage. Position 421 is an N6-acetyllysine; alternate (Lys421). Lys421 is covalently cross-linked (Glycyl lysine isopeptide (Lys-Gly) (interchain with G-Cter in SUMO2); alternate). 2 positions are modified to phosphoserine: Ser422 and Ser427. Thr431 bears the Phosphothreonine mark. Lys437 is modified (N6-acetyllysine; alternate). Lys437 participates in a covalent cross-link: Glycyl lysine isopeptide (Lys-Gly) (interchain with G-Cter in SUMO2); alternate. The residue at position 450 (Ser450) is a Phosphoserine. Glycyl lysine isopeptide (Lys-Gly) (interchain with G-Cter in SUMO2) cross-links involve residues Lys457 and Lys462. Positions 464–502 (TGYVVERPSTTKDKHKEEDKNSERITVKKETQSPEQVKS) are disordered. At Ser472 the chain carries Phosphoserine. The segment covering 472–502 (STTKDKHKEEDKNSERITVKKETQSPEQVKS) has biased composition (basic and acidic residues). Lys475 bears the N6-acetyllysine mark. Glycyl lysine isopeptide (Lys-Gly) (interchain with G-Cter in SUMO2) cross-links involve residues Lys491 and Lys492. A Phosphothreonine modification is found at Thr494. The residue at position 496 (Ser496) is a Phosphoserine. Residue Lys501 forms a Glycyl lysine isopeptide (Lys-Gly) (interchain with G-Cter in SUMO2) linkage. 4 positions are modified to phosphoserine: Ser502, Ser512, Ser525, and Ser531. Glycyl lysine isopeptide (Lys-Gly) (interchain with G-Cter in SUMO2) cross-links involve residues Lys536, Lys548, and Lys550. Ser559 and Ser564 each carry phosphoserine. Phosphothreonine is present on Thr566. Lys567 is covalently cross-linked (Glycyl lysine isopeptide (Lys-Gly) (interchain with G-Cter in SUMO2)). Ser578 carries the phosphoserine modification. Residue Lys580 forms a Glycyl lysine isopeptide (Lys-Gly) (interchain with G-Cter in SUMO2); alternate linkage. Lys580 participates in a covalent cross-link: Glycyl lysine isopeptide (Lys-Gly) (interchain with G-Cter in SUMO1); alternate. Residues Lys593, Lys599, and Lys622 each participate in a glycyl lysine isopeptide (Lys-Gly) (interchain with G-Cter in SUMO2) cross-link. Positions 637–796 (KATEEHSTRQ…SGFAGVSRPR (160 aa)) are disordered. The span at 638–656 (ATEEHSTRQKSPEIHRRID) shows a compositional bias: basic and acidic residues. Ser648, Ser658, and Ser660 each carry phosphoserine. A Phosphothreonine modification is found at Thr661. Over residues 668–750 (LAGEERVFKE…KHKREQDHSR (83 aa)) the composition is skewed to basic and acidic residues. Residue Lys676 forms a Glycyl lysine isopeptide (Lys-Gly) (interchain with G-Cter in SUMO2) linkage. Phosphoserine occurs at positions 690 and 760. Low complexity predominate over residues 751-762 (SSSSSASPSSPS). Over residues 763 to 785 (SREEKESKKEREEEFKTHHEMKE) the composition is skewed to basic and acidic residues. Residues Lys778 and Lys784 each participate in a glycyl lysine isopeptide (Lys-Gly) (interchain with G-Cter in SUMO2) cross-link. The residue at position 803 (Arg803) is a Citrulline. Position 809 is an omega-N-methylarginine (Arg809). Over residues 810 to 825 (GVFAGTNTGPNNSNTT) the composition is skewed to low complexity. Disordered stretches follow at residues 810–840 (GVFA…PEYT) and 862–920 (RGRG…EEKE). Lys831 is covalently cross-linked (Glycyl lysine isopeptide (Lys-Gly) (interchain with G-Cter in SUMO2); alternate). A Glycyl lysine isopeptide (Lys-Gly) (interchain with G-Cter in SUMO1); alternate cross-link involves residue Lys831. The segment covering 897–907 (IVEDEEETMEN) has biased composition (acidic residues). The segment covering 908 to 920 (NEEKKDRRKEEKE) has biased composition (basic and acidic residues). Residue Lys911 forms a Glycyl lysine isopeptide (Lys-Gly) (interchain with G-Cter in SUMO2) linkage.

The protein belongs to the BCLAF1/THRAP3 family. Interacts with Bcl-2 related proteins, EMD, with the adenovirus E1B 19 kDa protein and with DNA. Component of the SNARP complex which consists at least of SNIP1, SNW1, THRAP3, BCLAF1 and PNN. Component of a MACOM-like complex, named WTAP complex, composed of WTAP, ZC3H13, CBLL1, KIAA1429, RBM15, BCLAF1 and THRAP3. Citrullinated by PADI4. As to expression, ubiquitous.

Its subcellular location is the cytoplasm. The protein localises to the nucleus. The protein resides in the nucleus speckle. It localises to the nucleoplasm. Its function is as follows. Death-promoting transcriptional repressor. May be involved in cyclin-D1/CCND1 mRNA stability through the SNARP complex which associates with both the 3'end of the CCND1 gene and its mRNA. The chain is Bcl-2-associated transcription factor 1 (BCLAF1) from Homo sapiens (Human).